Here is a 371-residue protein sequence, read N- to C-terminus: MSLEPFKHSEALTFGVELELQLVNRHDYDLAPFAPDLLRALKGAQHAGDIKPEISPSMIEISTGICHTYQQALDELTTMRDLMQAASRSLNIGISGGGTHPFQQWADRIISDSPRYQYISELYGYLAKQFTVFGQHVHIGCPSADESLFLLHAIGRYVPHFVALAASSPYVQGVDTGFASARLNSVAAFPMSGRAPFLLTWDAFTAYFEKMRNTGVIESMKDFYWDIRPKPEFGTIEVRVMDTPLTVERACDIAAYIQMLARYLLLSRPFMPQEDDYLVYTFNRFQACRFGLEGEYVHPNELTRRPIAEHILSICDALVPHAEALGSMQALANIRALAENRNGDAEWLRQVDADARTQRETVRQACERWAA.

Belongs to the glutamate--cysteine ligase type 2 family. YbdK subfamily.

The enzyme catalyses L-cysteine + L-glutamate + ATP = gamma-L-glutamyl-L-cysteine + ADP + phosphate + H(+). ATP-dependent carboxylate-amine ligase which exhibits weak glutamate--cysteine ligase activity. The polypeptide is Putative glutamate--cysteine ligase 2 (Cupriavidus pinatubonensis (strain JMP 134 / LMG 1197) (Cupriavidus necator (strain JMP 134))).